We begin with the raw amino-acid sequence, 537 residues long: Chaperonin GroEL 1 (537 aa).

Residues 29-32 (TLGP), 86-90 (DGTTT), Gly413, 478-480 (NAA), and Asp494 contribute to the ATP site.

It belongs to the chaperonin (HSP60) family. In terms of assembly, forms a cylinder of 14 subunits composed of two heptameric rings stacked back-to-back. Interacts with the co-chaperonin GroES.

It is found in the cytoplasm. It carries out the reaction ATP + H2O + a folded polypeptide = ADP + phosphate + an unfolded polypeptide.. In terms of biological role, together with its co-chaperonin GroES, plays an essential role in assisting protein folding. The GroEL-GroES system forms a nano-cage that allows encapsulation of the non-native substrate proteins and provides a physical environment optimized to promote and accelerate protein folding. This Corynebacterium efficiens (strain DSM 44549 / YS-314 / AJ 12310 / JCM 11189 / NBRC 100395) protein is Chaperonin GroEL 1.